Reading from the N-terminus, the 239-residue chain is DNA repair protein RecO (239 aa).

This sequence belongs to the RecO family.

Its function is as follows. Involved in DNA repair and RecF pathway recombination. This chain is DNA repair protein RecO, found in Aromatoleum aromaticum (strain DSM 19018 / LMG 30748 / EbN1) (Azoarcus sp. (strain EbN1)).